Here is a 344-residue protein sequence, read N- to C-terminus: Holliday junction branch migration complex subunit RuvB (344 aa).

The segment at 4-194 (CLLRFCYNSL…FGITGHMEYY (191 aa)) is large ATPase domain (RuvB-L). ATP contacts are provided by residues L33, R34, G75, K78, T79, T80, 141–143 (EDF), R184, Y194, and R231. Position 79 (T79) interacts with Mg(2+). The interval 195 to 265 (TDIDLTEIVE…ITDKALTMLD (71 aa)) is small ATPAse domain (RuvB-S). The segment at 268–344 (HEGLDYVDQK…YEHLGYRYTE (77 aa)) is head domain (RuvB-H). Residues R304, R323, R325, and R328 each contribute to the DNA site.

This sequence belongs to the RuvB family. In terms of assembly, homohexamer. Forms an RuvA(8)-RuvB(12)-Holliday junction (HJ) complex. HJ DNA is sandwiched between 2 RuvA tetramers; dsDNA enters through RuvA and exits via RuvB. An RuvB hexamer assembles on each DNA strand where it exits the tetramer. Each RuvB hexamer is contacted by two RuvA subunits (via domain III) on 2 adjacent RuvB subunits; this complex drives branch migration. In the full resolvosome a probable DNA-RuvA(4)-RuvB(12)-RuvC(2) complex forms which resolves the HJ.

The protein resides in the cytoplasm. It catalyses the reaction ATP + H2O = ADP + phosphate + H(+). In terms of biological role, the RuvA-RuvB-RuvC complex processes Holliday junction (HJ) DNA during genetic recombination and DNA repair, while the RuvA-RuvB complex plays an important role in the rescue of blocked DNA replication forks via replication fork reversal (RFR). RuvA specifically binds to HJ cruciform DNA, conferring on it an open structure. The RuvB hexamer acts as an ATP-dependent pump, pulling dsDNA into and through the RuvAB complex. RuvB forms 2 homohexamers on either side of HJ DNA bound by 1 or 2 RuvA tetramers; 4 subunits per hexamer contact DNA at a time. Coordinated motions by a converter formed by DNA-disengaged RuvB subunits stimulates ATP hydrolysis and nucleotide exchange. Immobilization of the converter enables RuvB to convert the ATP-contained energy into a lever motion, pulling 2 nucleotides of DNA out of the RuvA tetramer per ATP hydrolyzed, thus driving DNA branch migration. The RuvB motors rotate together with the DNA substrate, which together with the progressing nucleotide cycle form the mechanistic basis for DNA recombination by continuous HJ branch migration. Branch migration allows RuvC to scan DNA until it finds its consensus sequence, where it cleaves and resolves cruciform DNA. The protein is Holliday junction branch migration complex subunit RuvB of Streptococcus mutans serotype c (strain ATCC 700610 / UA159).